The primary structure comprises 76 residues: Histone acetyltransferase (76 aa).

In terms of assembly, physically interacts with histone H3 in infected macrophages.

It is found in the secreted. Its subcellular location is the host cytoplasm. It localises to the host nucleus. The catalysed reaction is L-lysyl-[protein] + acetyl-CoA = N(6)-acetyl-L-lysyl-[protein] + CoA + H(+). Is completely inhibited by anacardic acid, an inhibitor of HAT activity. Functionally, histone acetyltransferase, which by binding to the host chromatin, may manipulate the expression of host genes involved in anti-inflammatory responses to evade clearance and to survive in the intracellular milieu. Acetylates histone H3 at the 'Lys-9' and 'Lys-14' positions. The polypeptide is Histone acetyltransferase (Mycobacterium tuberculosis (strain CDC 1551 / Oshkosh)).